The sequence spans 227 residues: Cytochrome c oxidase subunit 2 (227 aa).

At 1–14 the chain is on the mitochondrial intermembrane side; it reads MAYPFQLGLQDATS. A helical transmembrane segment spans residues 15 to 45; that stretch reads PIMEELTNFHDHTLMIVFLISSLVLYIISLM. Topologically, residues 46 to 59 are mitochondrial matrix; it reads LTTKLTHTSTMDAQ. The chain crosses the membrane as a helical span at residues 60 to 87; sequence EVETIWTILPAVILILIALPSLRILYMM. The Mitochondrial intermembrane portion of the chain corresponds to 88 to 227; that stretch reads DEINNPALTV…YFENWSASMI (140 aa). Cu cation is bound by residues histidine 161, cysteine 196, glutamate 198, cysteine 200, histidine 204, and methionine 207. Position 198 (glutamate 198) interacts with Mg(2+). The residue at position 218 (tyrosine 218) is a Phosphotyrosine.

The protein belongs to the cytochrome c oxidase subunit 2 family. As to quaternary structure, component of the cytochrome c oxidase (complex IV, CIV), a multisubunit enzyme composed of 14 subunits. The complex is composed of a catalytic core of 3 subunits MT-CO1, MT-CO2 and MT-CO3, encoded in the mitochondrial DNA, and 11 supernumerary subunits COX4I, COX5A, COX5B, COX6A, COX6B, COX6C, COX7A, COX7B, COX7C, COX8 and NDUFA4, which are encoded in the nuclear genome. The complex exists as a monomer or a dimer and forms supercomplexes (SCs) in the inner mitochondrial membrane with NADH-ubiquinone oxidoreductase (complex I, CI) and ubiquinol-cytochrome c oxidoreductase (cytochrome b-c1 complex, complex III, CIII), resulting in different assemblies (supercomplex SCI(1)III(2)IV(1) and megacomplex MCI(2)III(2)IV(2)). Found in a complex with TMEM177, COA6, COX18, COX20, SCO1 and SCO2. Interacts with TMEM177 in a COX20-dependent manner. Interacts with COX20. Interacts with COX16. It depends on Cu cation as a cofactor.

Its subcellular location is the mitochondrion inner membrane. It catalyses the reaction 4 Fe(II)-[cytochrome c] + O2 + 8 H(+)(in) = 4 Fe(III)-[cytochrome c] + 2 H2O + 4 H(+)(out). Its function is as follows. Component of the cytochrome c oxidase, the last enzyme in the mitochondrial electron transport chain which drives oxidative phosphorylation. The respiratory chain contains 3 multisubunit complexes succinate dehydrogenase (complex II, CII), ubiquinol-cytochrome c oxidoreductase (cytochrome b-c1 complex, complex III, CIII) and cytochrome c oxidase (complex IV, CIV), that cooperate to transfer electrons derived from NADH and succinate to molecular oxygen, creating an electrochemical gradient over the inner membrane that drives transmembrane transport and the ATP synthase. Cytochrome c oxidase is the component of the respiratory chain that catalyzes the reduction of oxygen to water. Electrons originating from reduced cytochrome c in the intermembrane space (IMS) are transferred via the dinuclear copper A center (CU(A)) of subunit 2 and heme A of subunit 1 to the active site in subunit 1, a binuclear center (BNC) formed by heme A3 and copper B (CU(B)). The BNC reduces molecular oxygen to 2 water molecules using 4 electrons from cytochrome c in the IMS and 4 protons from the mitochondrial matrix. The sequence is that of Cytochrome c oxidase subunit 2 (MT-CO2) from Oenomys hypoxanthus (Rufous-nosed rat).